Here is a 518-residue protein sequence, read N- to C-terminus: Sensor protein kinase HptS (518 aa).

A run of 2 helical transmembrane segments spans residues 20–40 and 222–242; these read IFPV…IYIW and GITL…FGFI. Residues 297–513 enclose the Histidine kinase domain; that stretch reads EQLIHSIEHT…LICYKIPLSR (217 aa). Position 325 is a phosphohistidine; by autocatalysis (His-325).

Autophosphorylated.

It localises to the cell membrane. The enzyme catalyses ATP + protein L-histidine = ADP + protein N-phospho-L-histidine.. In terms of biological role, member of the two-component regulatory system HptS/HptR that regulates genes involved in hexose phosphate transport system in response to changes in extracellular phosphate sources. May act as a sensor protein kinase which is autophosphorylated at a histidine residue and transfers its phosphate group to the conserved aspartic acid residue in the regulatory domain of HptS. In turn, HptS antagonizes CcpA-dependent transcription of a subset of CcpA-regulated genes involved in antibiotic susceptibility. This is Sensor protein kinase HptS (hptS) from Staphylococcus aureus (strain Mu50 / ATCC 700699).